Reading from the N-terminus, the 536-residue chain is Austinoid biosynthesis cluster protein W (536 aa).

Positions 1–19 (MKHPTVALLGVGMLGCAAA) are cleaved as a signal peptide. Disordered regions lie at residues 141 to 164 (GSAP…PGFP), 185 to 220 (SLPG…PGFS), 261 to 302 (FGVP…ASNG), 385 to 423 (PGSA…ASNG), and 491 to 536 (PSPT…SSAE). The span at 195–208 (SGPSQAAAAPSTGD) shows a compositional bias: low complexity. The span at 209 to 220 (SGSGLPGSPGFS) shows a compositional bias: gly residues. Composition is skewed to low complexity over residues 287–302 (AGNA…ASNG) and 408–423 (AGNA…ASNG).

It participates in secondary metabolite biosynthesis; terpenoid biosynthesis. Functionally, part of the gene cluster that mediates the biosynthesis of calidodehydroaustin, a fungal meroterpenoid. The first step of the pathway is the synthesis of 3,5-dimethylorsellinic acid by the polyketide synthase ausA. 3,5-dimethylorsellinic acid is then prenylated by the polyprenyl transferase ausN. Further epoxidation by the FAD-dependent monooxygenase ausM and cyclization by the probable terpene cyclase ausL lead to the formation of protoaustinoid A. Protoaustinoid A is then oxidized to spiro-lactone preaustinoid A3 by the combined action of the FAD-binding monooxygenases ausB and ausC, and the dioxygenase ausE. Acid-catalyzed keto-rearrangement and ring contraction of the tetraketide portion of preaustinoid A3 by ausJ lead to the formation of preaustinoid A4. The aldo-keto reductase ausK, with the help of ausH, is involved in the next step by transforming preaustinoid A4 into isoaustinone which is in turn hydroxylated by the P450 monooxygenase ausI to form austinolide. The cytochrome P450 monooxygenase ausG modifies austinolide to austinol. Austinol is further acetylated to austin by the O-acetyltransferase ausP, which spontaneously changes to dehydroaustin. The cytochrome P450 monooxygenase ausR then converts dehydroaustin is into 7-dehydrodehydroaustin. The hydroxylation catalyzed by ausR permits the O-acetyltransferase ausQ to add an additional acetyl group to the molecule, leading to the formation of acetoxydehydroaustin. The short chain dehydrogenase ausT catalyzes the reduction of the double bond present between carbon atoms 1 and 2 to convert 7-dehydrodehydroaustin into 1,2-dihydro-7-hydroxydehydroaustin. AusQ catalyzes not only an acetylation reaction but also the addition of the PKS ausV diketide product to 1,2-dihydro-7-hydroxydehydroaustin, forming precalidodehydroaustin. Finally, the iron/alpha-ketoglutarate-dependent dioxygenase converts precalidodehydroaustin into calidodehydroaustin. The sequence is that of Austinoid biosynthesis cluster protein W from Aspergillus calidoustus.